The following is a 272-amino-acid chain: U11/U12 small nuclear ribonucleoprotein 35 kDa protein (272 aa).

The RRM domain occupies 51 to 129 (LTLFVSRLSP…REVFVDFELE (79 aa)). Basic and acidic residues-rich tracts occupy residues 146–162 (GKKE…DRPF) and 190–272 (RDRS…EHNR). The interval 146–272 (GKKESGQLRF…RKHRSDEHNR (127 aa)) is disordered. Positions 221–258 (TKDDKEQNAEHTKRERSREQAKNDKDKEKKDSKRERSR) form a coiled coil.

The protein resides in the nucleus. The polypeptide is U11/U12 small nuclear ribonucleoprotein 35 kDa protein (snrnp35) (Xenopus laevis (African clawed frog)).